We begin with the raw amino-acid sequence, 353 residues long: Endophilin-A3 (353 aa).

The segment at 1–21 is membrane-binding amphipathic helix; the sequence is MSVAGLKKQFHKASQLFSEKI. The 232-residue stretch at 18–249 folds into the BAR domain; the sequence is SEKISGAEGT…LQNRINVASS (232 aa). The required for dimerization upon membrane association stretch occupies residues 60–87; sequence PNPAYRAKLGMLNTMSKIRGQVKTTGYP. Residues 180 to 201 are a coiled coil; sequence DEEVKQAVEKFEESKELAERSM. The segment at 218–254 is interaction with ARC; the sequence is FVEAALDYHKQSTEILEDLQSKLQNRINVASSRPKRE. Residues 291–350 form the SH3 domain; that stretch reads VDQPCCQALYDFEPENEGELGFKEGDIITLTNQIDENWYEGMLNGESGFFPHNYVEVMVP.

The protein belongs to the endophilin family. Interacts with ARC. Interacts with SYNJ1 and DNM1. As to expression, highest level in a region associated with endocytosis of yolk proteins in developing oocytes (at protein level). Highest level in small ovarian follicles. High levels in brain and testis. Lower level in adrenal glands.

Its subcellular location is the cytoplasm. The protein resides in the early endosome membrane. Functionally, implicated in endocytosis. May recruit other proteins to membranes with high curvature. Implicated in endocytosis of yolk proteins during oogenesis. This Gallus gallus (Chicken) protein is Endophilin-A3.